A 40-amino-acid polypeptide reads, in one-letter code: WWGPGYGGYGPGYGSGLGDAFSDMFGDGYGDFNFGMSGGG.

The protein to C.vinosum CV1 and CV2. As to quaternary structure, the protein envelope of the sulfur globules is composed of the three different proteins TR0, TR1 and TR2.

Structural protein of the sulfur globules, which are intracellular globules that serve for sulfur storage in purple sulfur bacteria. The polypeptide is Sulfur globule protein TR0 (Thiocapsa roseopersicina).